The sequence spans 74 residues: Peptide BmKb2 (74 aa).

The first 22 residues, 1–22 (MEIKYLLTVFLVLLIVSDHCQA), serve as a signal peptide directing secretion. Lysine 40 carries the post-translational modification Lysine amide. Residues 46 to 74 (DLNGQIDHFKNFRKRDAELEELLSKLPIY) constitute a propeptide that is removed on maturation.

Belongs to the non-disulfide-bridged peptide (NDBP) superfamily. Short antimicrobial peptide (group 4) family.

It is found in the secreted. Its subcellular location is the target cell membrane. In terms of biological role, antibacterial peptide. This peptide gene is up-regulated at the transcriptional level after the venom gland is challenged by Gram-positive bacteria. The protein is Peptide BmKb2 of Olivierus martensii (Manchurian scorpion).